Here is a 325-residue protein sequence, read N- to C-terminus: Probable cell division protein WhiA (325 aa).

The segment at residues 280-313 (SLKELGSMLKNPLGKSGVNHRLRKIDKIAEELRK) is a DNA-binding region (H-T-H motif).

This sequence belongs to the WhiA family.

In terms of biological role, involved in cell division and chromosome segregation. The polypeptide is Probable cell division protein WhiA (Caldicellulosiruptor saccharolyticus (strain ATCC 43494 / DSM 8903 / Tp8T 6331)).